A 337-amino-acid chain; its full sequence is WRKY transcription factor 23 (337 aa).

The segment at 100-160 is disordered; sequence INPPATPNSS…KNNQKRQREA (61 aa). Over residues 106-118 the composition is skewed to low complexity; that stretch reads PNSSSISSASSEA. The span at 142–155 shows a compositional bias: basic residues; the sequence is HTKKQLKAKKNNQK. Positions 168–233 form a DNA-binding region, WRKY; it reads SEVDHLEDGY…YEGQHTHISP (66 aa).

It belongs to the WRKY group II-c family.

The protein localises to the nucleus. In terms of biological role, transcription factor. Interacts specifically with the W box (5'-(T)TGAC[CT]-3'), a frequently occurring elicitor-responsive cis-acting element. This chain is WRKY transcription factor 23 (WRKY23), found in Arabidopsis thaliana (Mouse-ear cress).